The following is a 355-amino-acid chain: tRNA N6-adenosine threonylcarbamoyltransferase (355 aa).

Fe cation contacts are provided by H110 and H114. Residues 132-136, D165, G178, D182, and N288 each bind substrate; that span reads LVSGG. Residue D316 participates in Fe cation binding.

Belongs to the KAE1 / TsaD family. Fe(2+) is required as a cofactor.

The protein resides in the cytoplasm. It catalyses the reaction L-threonylcarbamoyladenylate + adenosine(37) in tRNA = N(6)-L-threonylcarbamoyladenosine(37) in tRNA + AMP + H(+). Required for the formation of a threonylcarbamoyl group on adenosine at position 37 (t(6)A37) in tRNAs that read codons beginning with adenine. Is involved in the transfer of the threonylcarbamoyl moiety of threonylcarbamoyl-AMP (TC-AMP) to the N6 group of A37, together with TsaE and TsaB. TsaD likely plays a direct catalytic role in this reaction. The sequence is that of tRNA N6-adenosine threonylcarbamoyltransferase from Lawsonia intracellularis (strain PHE/MN1-00).